We begin with the raw amino-acid sequence, 259 residues long: Haloacid dehalogenase-like hydrolase domain-containing protein 2 (259 aa).

Mg(2+) is bound by residues Asp-13 and Ser-15. Residues 13-15 (DLS) and 46-47 (TN) each bind substrate. Positions 47-71 (NTTKESKQDLLERLKKLEFDISEDE) form a coiled coil. Lys-50 is subject to N6-succinyllysine. Substrate is bound at residue Lys-179. Asp-204 is a binding site for Mg(2+).

This sequence belongs to the HAD-like hydrolase superfamily. Requires Mg(2+) as cofactor.

This Bos taurus (Bovine) protein is Haloacid dehalogenase-like hydrolase domain-containing protein 2 (HDHD2).